The following is a 370-amino-acid chain: DnaJ homolog subfamily B member 12 (370 aa).

An N-acetylmethionine modification is found at Met1. Residues 51–92 (NQKPQPAGDQPQPTEATHTTHRKAAGANTASANGEAGGESTK) are disordered. One can recognise a J domain in the interval 110–174 (DYYEILGVSR…EKRKQYDQFG (65 aa)). The residue at position 185 (His185) is a Pros-methylhistidine. The helical transmembrane segment at 242 to 262 (GGLGVFVQLMPILILILVSAL) threads the bilayer.

It belongs to the DnaJ family. DNAJB12/DNAJB14 subfamily. Homodimer and homotetramer. Interacts (via J domain) with HSPA8/Hsc70. Forms a multiprotein complex, at least composed of DNAJB12, DNAJB14, HSPA8/Hsc70 and SGTA; interaction with DNAJB14 and HSPA8/Hsc70 is direct. In terms of processing, methylated at His-185 by METTL9.

The protein localises to the endoplasmic reticulum membrane. It localises to the nucleus membrane. Functionally, acts as a co-chaperone with HSPA8/Hsc70; required to promote protein folding and trafficking, prevent aggregation of client proteins, and promote unfolded proteins to endoplasmic reticulum-associated degradation (ERAD) pathway. Acts by determining HSPA8/Hsc70's ATPase and polypeptide-binding activities. Can also act independently of HSPA8/Hsc70: together with DNAJB14, acts as a chaperone that promotes maturation of potassium channels KCND2 and KCNH2 by stabilizing nascent channel subunits and assembling them into tetramers. While stabilization of nascent channel proteins is dependent on HSPA8/Hsc70, the process of oligomerization of channel subunits is independent of HSPA8/Hsc70. When overexpressed, forms membranous structures together with DNAJB14 and HSPA8/Hsc70 within the nucleus; the role of these structures, named DJANGOs, is still unclear. The polypeptide is DnaJ homolog subfamily B member 12 (DNAJB12) (Bos taurus (Bovine)).